A 315-amino-acid polypeptide reads, in one-letter code: Initiation factor TFIIB homolog (315 aa).

Belongs to the asfivirus C315R family.

Functionally, putative initation factor. In Ornithodoros (relapsing fever ticks), this protein is Initiation factor TFIIB homolog.